A 210-amino-acid polypeptide reads, in one-letter code: Riboflavin kinase (210 aa).

An H-T-H motif-like region spans residues 1-81 (MECKERRLIG…DLLRYFNIAS (81 aa)). The riboflavin kinase stretch occupies residues 82 to 210 (IRLIGRVISG…GDIVEVEILL (129 aa)). Residue 91–96 (GLGEGA) participates in CDP binding. Mg(2+) is bound by residues Thr-120 and Asn-122. Thr-177 and Glu-185 together coordinate FMN. Position 190–193 (190–193 (VKLR)) interacts with CDP.

This sequence belongs to the archaeal riboflavin kinase family. Mg(2+) serves as cofactor.

It catalyses the reaction riboflavin + CTP = CDP + FMN + H(+). Its pathway is cofactor biosynthesis; FMN biosynthesis; FMN from riboflavin (CTP route): step 1/1. Functionally, catalyzes the CTP-dependent phosphorylation of riboflavin (vitamin B2) to form flavin mononucleotide (FMN). This Pyrobaculum aerophilum (strain ATCC 51768 / DSM 7523 / JCM 9630 / CIP 104966 / NBRC 100827 / IM2) protein is Riboflavin kinase (ribK).